We begin with the raw amino-acid sequence, 696 residues long: Gametogenetin-binding protein 2 (696 aa).

Serine 360 is modified (phosphoserine).

In terms of assembly, interacts with GGN.

It localises to the cytoplasmic vesicle. In terms of biological role, may be involved in spermatogenesis. The chain is Gametogenetin-binding protein 2 (Ggnbp2) from Rattus norvegicus (Rat).